A 441-amino-acid chain; its full sequence is Alpha-monoglucosyldiacylglycerol synthase (441 aa).

This sequence belongs to the glycosyltransferase group 1 family. Glycosyltransferase 4 subfamily. Mg(2+) serves as cofactor.

Its subcellular location is the cell membrane. The catalysed reaction is a 1,2-diacyl-sn-glycerol + UDP-alpha-D-glucose = a 1,2-diacyl-3-O-(alpha-D-glucopyranosyl)-sn-glycerol + UDP + H(+). With respect to regulation, activated by the negatively charged lipid phosphatidylglycerol (PG). In terms of biological role, glucosyltransferase involved in the biosynthesis of the non-bilayer-prone membrane lipid alpha-monoglucosyldiacylglycerol. This is a major component for maintaining a certain anionic lipid surface charge density, for balancing the bilayer to non-bilayer phase equilibria and for keeping a constant lipid bilayer spontaneous curvature (curvature packing stress). Catalyzes the transfer of a glucosyl residue from UDP-Glc to diacylglycerol (DAG) acceptor to form the corresponding alpha-glucosyl-DAG (1,2-diacyl-3-O-(alpha-D-glucopyranosyl)-sn-glycerol). It can only use UDP-Glc as sugar donor. The chain is Alpha-monoglucosyldiacylglycerol synthase from Streptococcus pneumoniae (strain ATCC BAA-255 / R6).